The sequence spans 228 residues: 7-cyano-7-deazaguanine synthase (228 aa).

9-19 (LSGGPDSTTVL) is a binding site for ATP. Zn(2+) is bound by residues Cys-193, Cys-203, Cys-206, and Cys-209.

It belongs to the QueC family. Requires Zn(2+) as cofactor.

It carries out the reaction 7-carboxy-7-deazaguanine + NH4(+) + ATP = 7-cyano-7-deazaguanine + ADP + phosphate + H2O + H(+). The protein operates within purine metabolism; 7-cyano-7-deazaguanine biosynthesis. Its function is as follows. Catalyzes the ATP-dependent conversion of 7-carboxy-7-deazaguanine (CDG) to 7-cyano-7-deazaguanine (preQ(0)). In Rickettsia peacockii (strain Rustic), this protein is 7-cyano-7-deazaguanine synthase.